Consider the following 375-residue polypeptide: Succinyl-diaminopimelate desuccinylase (375 aa).

Residue H66 coordinates Zn(2+). D68 is an active-site residue. D99 provides a ligand contact to Zn(2+). Catalysis depends on E133, which acts as the Proton acceptor. Zn(2+) contacts are provided by E134, E162, and H348.

It belongs to the peptidase M20A family. DapE subfamily. Homodimer. The cofactor is Zn(2+). Co(2+) is required as a cofactor.

The catalysed reaction is N-succinyl-(2S,6S)-2,6-diaminopimelate + H2O = (2S,6S)-2,6-diaminopimelate + succinate. It participates in amino-acid biosynthesis; L-lysine biosynthesis via DAP pathway; LL-2,6-diaminopimelate from (S)-tetrahydrodipicolinate (succinylase route): step 3/3. Functionally, catalyzes the hydrolysis of N-succinyl-L,L-diaminopimelic acid (SDAP), forming succinate and LL-2,6-diaminopimelate (DAP), an intermediate involved in the bacterial biosynthesis of lysine and meso-diaminopimelic acid, an essential component of bacterial cell walls. In Salmonella typhi, this protein is Succinyl-diaminopimelate desuccinylase.